Here is a 281-residue protein sequence, read N- to C-terminus: Probable catechol O-methyltransferase 2 (281 aa).

Residues isoleucine 78, glutamate 100, serine 108, glutamate 127, valine 128, alanine 156, and aspartate 183 each coordinate S-adenosyl-L-methionine. Aspartate 183 is a Mg(2+) binding site. Lysine 186 is a binding site for substrate. Aspartate 211 and asparagine 212 together coordinate Mg(2+). Residue asparagine 212 coordinates substrate.

Belongs to the class I-like SAM-binding methyltransferase superfamily. Cation-dependent O-methyltransferase family. It depends on Mg(2+) as a cofactor.

Its subcellular location is the vacuole. It carries out the reaction a catechol + S-adenosyl-L-methionine = a guaiacol + S-adenosyl-L-homocysteine + H(+). The protein is Probable catechol O-methyltransferase 2 of Schizosaccharomyces pombe (strain 972 / ATCC 24843) (Fission yeast).